Consider the following 417-residue polypeptide: Multifunctional CCA protein (417 aa).

Residues Gly8 and Arg11 each contribute to the ATP site. Residues Gly8 and Arg11 each coordinate CTP. Positions 21 and 23 each coordinate Mg(2+). Residues Arg91, Arg143, and Arg146 each contribute to the ATP site. Positions 91, 143, and 146 each coordinate CTP. The HD domain occupies 232–333 (TGVHVMMVVD…VRLFERSDAL (102 aa)).

It belongs to the tRNA nucleotidyltransferase/poly(A) polymerase family. Bacterial CCA-adding enzyme type 1 subfamily. Monomer. Can also form homodimers and oligomers. The cofactor is Mg(2+). Requires Ni(2+) as cofactor.

It catalyses the reaction a tRNA precursor + 2 CTP + ATP = a tRNA with a 3' CCA end + 3 diphosphate. It carries out the reaction a tRNA with a 3' CCA end + 2 CTP + ATP = a tRNA with a 3' CCACCA end + 3 diphosphate. Its function is as follows. Catalyzes the addition and repair of the essential 3'-terminal CCA sequence in tRNAs without using a nucleic acid template. Adds these three nucleotides in the order of C, C, and A to the tRNA nucleotide-73, using CTP and ATP as substrates and producing inorganic pyrophosphate. tRNA 3'-terminal CCA addition is required both for tRNA processing and repair. Also involved in tRNA surveillance by mediating tandem CCA addition to generate a CCACCA at the 3' terminus of unstable tRNAs. While stable tRNAs receive only 3'-terminal CCA, unstable tRNAs are marked with CCACCA and rapidly degraded. The sequence is that of Multifunctional CCA protein from Paraburkholderia phymatum (strain DSM 17167 / CIP 108236 / LMG 21445 / STM815) (Burkholderia phymatum).